We begin with the raw amino-acid sequence, 277 residues long: MSQVQFSHNPLFCIDIIKTYKPDFTPRVAFILGSGLGALADQIENAVAISYEKLPGFPVSTVHGHAGELVLGHLQGVPVVCMKGRGHFYEGRGMTIMTDAIRTFKLLGCELLFCTNAAGSLRPEVGAGSLVALKDHINTMPGTPMVGLNDDRFGERFFSLANAYDAEYRALLQKVAKEEGFPLTEGVFVSYPGPNFETAAEIRMMQIIGGDVVGMSVVPEVISARHCDLKVVAVSAITNMAEGLSDVKLSHAQTLAAAELSKQNFINLICGFLRKIA.

Phosphate contacts are provided by residues histidine 65, 85–87 (RGH), and alanine 117. Glutamate 197 contributes to the a purine D-ribonucleoside binding site. A phosphate-binding site is contributed by serine 216. Position 239 (asparagine 239) interacts with a purine D-ribonucleoside.

The protein belongs to the PNP/MTAP phosphorylase family. Hexamer. Dimer of trimers.

The catalysed reaction is a purine D-ribonucleoside + phosphate = a purine nucleobase + alpha-D-ribose 1-phosphate. The protein operates within purine metabolism; xanthosine degradation. It participates in purine metabolism; purine nucleoside salvage. Its activity is regulated as follows. Rapidly inactivated by p-chloromercuriphenylsulfonic acid (p-CMB). Dithiothreitol incubation restores the activity. The purine nucleoside phosphorylases catalyze the phosphorolytic breakdown of the N-glycosidic bond in the beta-(deoxy)ribonucleoside molecules, with the formation of the corresponding free purine bases and pentose-1-phosphate. This protein can degrade all purine nucleosides including xanthosine, inosine and guanosine, but cannot cleave adenosine, deoxyadenosine or hypoxanthine arabinoside. Has a preference for the neutral over the monoanionic form of xanthosine. This is Purine nucleoside phosphorylase 2 (xapA) from Escherichia coli (strain K12).